We begin with the raw amino-acid sequence, 525 residues long: tRNA-2-methylthio-N(6)-dimethylallyladenosine synthase (525 aa).

Residues 14–130 (RTYQVRTYGC…LPTLLERARH (117 aa)) form the MTTase N-terminal domain. Positions 23, 59, 93, 167, 171, and 174 each coordinate [4Fe-4S] cluster. The 248-residue stretch at 153–400 (RESAYAGWVS…IELQERISLE (248 aa)) folds into the Radical SAM core domain. The TRAM domain maps to 403–482 (QAQVGRTLEL…PHHLIADGAL (80 aa)).

The protein belongs to the methylthiotransferase family. MiaB subfamily. In terms of assembly, monomer. [4Fe-4S] cluster is required as a cofactor.

The protein resides in the cytoplasm. It carries out the reaction N(6)-dimethylallyladenosine(37) in tRNA + (sulfur carrier)-SH + AH2 + 2 S-adenosyl-L-methionine = 2-methylsulfanyl-N(6)-dimethylallyladenosine(37) in tRNA + (sulfur carrier)-H + 5'-deoxyadenosine + L-methionine + A + S-adenosyl-L-homocysteine + 2 H(+). Functionally, catalyzes the methylthiolation of N6-(dimethylallyl)adenosine (i(6)A), leading to the formation of 2-methylthio-N6-(dimethylallyl)adenosine (ms(2)i(6)A) at position 37 in tRNAs that read codons beginning with uridine. The protein is tRNA-2-methylthio-N(6)-dimethylallyladenosine synthase of Mycobacterium sp. (strain MCS).